A 257-amino-acid polypeptide reads, in one-letter code: Ribosome-recycling factor, mitochondrial (257 aa).

It belongs to the RRF family.

The protein resides in the mitochondrion. Its function is as follows. Necessary for protein synthesis in mitochondria. Functions as a ribosome recycling factor in mitochondria. The sequence is that of Ribosome-recycling factor, mitochondrial (RRF1) from Debaryomyces hansenii (strain ATCC 36239 / CBS 767 / BCRC 21394 / JCM 1990 / NBRC 0083 / IGC 2968) (Yeast).